Consider the following 380-residue polypeptide: Pectin lyase (380 aa).

An N-terminal signal peptide occupies residues 1 to 20 (MRSASILSAALAAFAPLASA). An N-linked (GlcNAc...) asparagine glycan is attached at N130.

This sequence belongs to the polysaccharide lyase 1 family.

Its subcellular location is the secreted. The catalysed reaction is Eliminative cleavage of (1-&gt;4)-alpha-D-galacturonan methyl ester to give oligosaccharides with 4-deoxy-6-O-methyl-alpha-D-galact-4-enuronosyl groups at their non-reducing ends.. The sequence is that of Pectin lyase (PNLA) from Colletotrichum gloeosporioides (Anthracnose fungus).